Reading from the N-terminus, the 144-residue chain is Transcriptional regulator MraZ (144 aa).

2 SpoVT-AbrB domains span residues Glu4–Lys47 and Ala77–Gln120.

It belongs to the MraZ family. In terms of assembly, forms oligomers.

It is found in the cytoplasm. The protein localises to the nucleoid. This chain is Transcriptional regulator MraZ, found in Treponema denticola (strain ATCC 35405 / DSM 14222 / CIP 103919 / JCM 8153 / KCTC 15104).